The chain runs to 314 residues: MTGISIGVVRRPNEADVATIRSLAEAAERADGVAPLPEQVLLHLKRSGDADADADTDAWHFVARRLSPQGSELTGYAFLDKSNAEEGPTAEVVVLPDARRQGVGGALLDALRMKVRRGDKPIRVWSHGALPAAAALAAKRGLEPVRELWVMSRPLADVPPAPTPPDGIRIATFRPGVDDEAWVEVNARAFAHHPEQGSMTVQDLRDRMAEPWFDPEGFFLAWRGAKLAGFHWTKVHDHSAYGDGPVGEVYVVGLDPAEQGHGLGRTLTEVGLRHLHDRGLGEVILYVEADNTPAVAVYTKLGFTRRSADVMYQL.

2 N-acetyltransferase domains span residues 18-156 and 168-314; these read ATIR…RPLA and IRIA…MYQL. 1D-myo-inositol 2-(L-cysteinylamino)-2-deoxy-alpha-D-glucopyranoside is bound at residue Glu-38. 92–94 serves as a coordination point for acetyl-CoA; it reads VVV. Positions 195, 234, and 248 each coordinate 1D-myo-inositol 2-(L-cysteinylamino)-2-deoxy-alpha-D-glucopyranoside. Acetyl-CoA is bound by residues 252-254 and 259-265; these read VGL and QGHGLGR. Tyr-286 is a 1D-myo-inositol 2-(L-cysteinylamino)-2-deoxy-alpha-D-glucopyranoside binding site.

This sequence belongs to the acetyltransferase family. MshD subfamily. Monomer.

It carries out the reaction 1D-myo-inositol 2-(L-cysteinylamino)-2-deoxy-alpha-D-glucopyranoside + acetyl-CoA = mycothiol + CoA + H(+). Functionally, catalyzes the transfer of acetyl from acetyl-CoA to desacetylmycothiol (Cys-GlcN-Ins) to form mycothiol. The sequence is that of Mycothiol acetyltransferase from Catenulispora acidiphila (strain DSM 44928 / JCM 14897 / NBRC 102108 / NRRL B-24433 / ID139908).